The chain runs to 249 residues: 5'-nucleotidase SurE (249 aa).

D8, D9, S39, and N91 together coordinate a divalent metal cation.

Belongs to the SurE nucleotidase family. The cofactor is a divalent metal cation.

The protein localises to the cytoplasm. It catalyses the reaction a ribonucleoside 5'-phosphate + H2O = a ribonucleoside + phosphate. In terms of biological role, nucleotidase that shows phosphatase activity on nucleoside 5'-monophosphates. This is 5'-nucleotidase SurE from Pseudomonas putida (strain W619).